The following is a 286-amino-acid chain: Bifunctional protein FolD (286 aa).

NADP(+)-binding positions include 165 to 167, Ser-190, and Val-231; that span reads GRS.

The protein belongs to the tetrahydrofolate dehydrogenase/cyclohydrolase family. Homodimer.

It catalyses the reaction (6R)-5,10-methylene-5,6,7,8-tetrahydrofolate + NADP(+) = (6R)-5,10-methenyltetrahydrofolate + NADPH. The catalysed reaction is (6R)-5,10-methenyltetrahydrofolate + H2O = (6R)-10-formyltetrahydrofolate + H(+). Its pathway is one-carbon metabolism; tetrahydrofolate interconversion. Catalyzes the oxidation of 5,10-methylenetetrahydrofolate to 5,10-methenyltetrahydrofolate and then the hydrolysis of 5,10-methenyltetrahydrofolate to 10-formyltetrahydrofolate. The chain is Bifunctional protein FolD from Bacillus cereus (strain G9842).